The sequence spans 475 residues: Ribulose bisphosphate carboxylase large chain (475 aa).

A propeptide spanning residues 1–2 (MS) is cleaved from the precursor. An N-acetylproline modification is found at P3. Position 14 is an N6,N6,N6-trimethyllysine (K14). Residues N123 and T173 each coordinate substrate. The active-site Proton acceptor is K175. K177 contributes to the substrate binding site. K201, D203, and E204 together coordinate Mg(2+). Residue K201 is modified to N6-carboxylysine. Catalysis depends on H294, which acts as the Proton acceptor. The substrate site is built by R295, H327, and S379.

It belongs to the RuBisCO large chain family. Type I subfamily. As to quaternary structure, heterohexadecamer of 8 large chains and 8 small chains; disulfide-linked. The disulfide link is formed within the large subunit homodimers. Mg(2+) is required as a cofactor. In terms of processing, the disulfide bond which can form in the large chain dimeric partners within the hexadecamer appears to be associated with oxidative stress and protein turnover.

The protein resides in the plastid. It is found in the chloroplast. The catalysed reaction is 2 (2R)-3-phosphoglycerate + 2 H(+) = D-ribulose 1,5-bisphosphate + CO2 + H2O. It catalyses the reaction D-ribulose 1,5-bisphosphate + O2 = 2-phosphoglycolate + (2R)-3-phosphoglycerate + 2 H(+). Its function is as follows. RuBisCO catalyzes two reactions: the carboxylation of D-ribulose 1,5-bisphosphate, the primary event in carbon dioxide fixation, as well as the oxidative fragmentation of the pentose substrate in the photorespiration process. Both reactions occur simultaneously and in competition at the same active site. The chain is Ribulose bisphosphate carboxylase large chain from Buxus microphylla (Littleleaf boxwood).